The following is a 201-amino-acid chain: Ribonuclease HII (201 aa).

One can recognise an RNase H type-2 domain in the interval 11-201; it reads LRECGCDEAG…VVDADRPTTE (191 aa). A divalent metal cation-binding residues include D17, E18, and D109.

This sequence belongs to the RNase HII family. Mn(2+) is required as a cofactor. The cofactor is Mg(2+).

It is found in the cytoplasm. The enzyme catalyses Endonucleolytic cleavage to 5'-phosphomonoester.. Functionally, endonuclease that specifically degrades the RNA of RNA-DNA hybrids. This is Ribonuclease HII (rnhB) from Porphyromonas gingivalis (strain ATCC BAA-308 / W83).